The sequence spans 429 residues: Ribonuclease E/G-like protein (429 aa).

The Mg(2+) site is built by Asp290 and Asp332.

Belongs to the RNase E/G family. The cofactor is Mg(2+).

Its subcellular location is the plastid. It localises to the chloroplast stroma. In terms of biological role, involved in intercistronic processing of primary transcripts from chloroplast operons. The endonucleolytic activity of the enzyme depends on the number of phosphates at the 5' end, is inhibited by structured RNA, and preferentially cleaves A/U-rich sequences. The sequence is that of Ribonuclease E/G-like protein (rne) from Guillardia theta (Cryptophyte).